The primary structure comprises 552 residues: Hyaluronan synthase 2 (552 aa).

Topologically, residues 1-11 are cytoplasmic; it reads MHCERFLCILR. Residues 12–32 form a helical membrane-spanning segment; sequence IIGTTLFGVSLLLGITAAYIV. Residues 33-45 lie on the Extracellular side of the membrane; the sequence is GYQFIQTDNYYFS. A helical membrane pass occupies residues 46–66; the sequence is FGLYGAFLASHLIIQSLFAFL. Topologically, residues 67–374 are cytoplasmic; the sequence is EHRKMKKSLE…NAMWFHKHHL (308 aa). Threonine 110 is modified (phosphothreonine). Lysine 190 participates in a covalent cross-link: Glycyl lysine isopeptide (Lys-Gly) (interchain with G-Cter in ubiquitin). Serine 221 carries an O-linked (GlcNAc) serine glycan. Position 328 is a phosphothreonine (threonine 328). Residues 375 to 395 form a helical membrane-spanning segment; that stretch reads WMTYEAIITGFFPFFLIATVI. Residues 396–402 are Extracellular-facing; sequence QLFYRGK. The helical transmembrane segment at 403-423 threads the bilayer; it reads IWNILLFLLTVQLVGLIKSSF. The Cytoplasmic segment spans residues 424–429; that stretch reads ASCLRG. Residues 430–450 form a helical membrane-spanning segment; sequence NIVMVFMSLYSVLYMSSLLPA. Residues 451-475 are Extracellular-facing; that stretch reads KMFAIATINKAGWGTSGRKTIVVNF. A helical membrane pass occupies residues 476–496; that stretch reads IGLIPVSVWFTILLGGVIFTI. The Cytoplasmic segment spans residues 497-510; the sequence is YKESKRPFSESKQT. Residues 511–531 form a helical membrane-spanning segment; it reads VLIVGTLLYACYWVMLLTLYV. Residues 532–552 lie on the Extracellular side of the membrane; sequence VLINKCGRRKKGQQYDMVLDV.

This sequence belongs to the NodC/HAS family. In terms of assembly, homodimer; dimerization promotes enzymatic activity. Forms heterodimer with HAS3. Forms heterodimer with HAS1. Requires Mg(2+) as cofactor. Phosphorylation at Thr-328 is essential for hyaluronan synthase activity. Phosphorylation at Thr-110 is required for transport from ER to Golgi. In terms of processing, O-GlcNAcylation at Ser-221 increases the stability of HAS2 and plasma membrane localization. Post-translationally, ubiquitination at Lys-190; this ubiquitination is essential for hyaluronan synthase activity and homo- or hetero-oligomerization. Can also be poly-ubiquitinated. Deubiquitinated by USP17 and USP4. USP17 efficiently removes 'Lys-63'- and 'Lys-48'-linked polyubiquitin chains, whereas USP4 preferentially removes monoubiquitination and, partially, both 'Lys-63'- and 'Lys-48'-linked polyubiquitin chain. In terms of tissue distribution, expressed in fibroblasts.

The protein resides in the cell membrane. Its subcellular location is the endoplasmic reticulum membrane. The protein localises to the vesicle. It localises to the golgi apparatus membrane. It is found in the lysosome. It catalyses the reaction [hyaluronan](n) + UDP-N-acetyl-alpha-D-glucosamine = N-acetyl-beta-D-glucosaminyl-(1-&gt;4)-[hyaluronan](n) + UDP + H(+). It carries out the reaction N-acetyl-beta-D-glucosaminyl-(1-&gt;4)-[hyaluronan](n) + UDP-alpha-D-glucuronate = [hyaluronan](n+1) + UDP + H(+). The protein operates within glycan biosynthesis; hyaluronan biosynthesis. Regulated by several post-translational modifications such as ubiquitination/deubiquitination, phosphorylation and O-GlcNAcylation. The enzymatic activity depends on the availability of UDP-GlcUA and UDP-GlcNAc. Functionally, catalyzes the addition of GlcNAc or GlcUA monosaccharides to the nascent hyaluronan polymer. Therefore, it is essential to hyaluronan synthesis a major component of most extracellular matrices that has a structural role in tissues architectures and regulates cell adhesion, migration and differentiation. This is one of three isoenzymes responsible for cellular hyaluronan synthesis and it is particularly responsible for the synthesis of high molecular mass hyaluronan. The polypeptide is Hyaluronan synthase 2 (Homo sapiens (Human)).